The chain runs to 78 residues: Large ribosomal subunit protein eL20 (78 aa).

Belongs to the eukaryotic ribosomal protein eL20 family. As to quaternary structure, part of the 50S ribosomal subunit. Binds 23S rRNA.

The chain is Large ribosomal subunit protein eL20 from Pyrobaculum aerophilum (strain ATCC 51768 / DSM 7523 / JCM 9630 / CIP 104966 / NBRC 100827 / IM2).